Reading from the N-terminus, the 585-residue chain is Probable long-chain-fatty-acid--AMP ligase FadD30 (585 aa).

This sequence belongs to the ATP-dependent AMP-binding enzyme family.

It participates in lipid metabolism; fatty acid biosynthesis. In terms of biological role, catalyzes the activation of long-chain fatty acids as acyl-adenylates (acyl-AMP), which are then transferred to a multifunctional polyketide synthase (PKS) for further chain extension. In Mycobacterium tuberculosis (strain CDC 1551 / Oshkosh), this protein is Probable long-chain-fatty-acid--AMP ligase FadD30 (fadD30).